Here is a 149-residue protein sequence, read N- to C-terminus: Nucleoside diphosphate kinase 1 (149 aa).

ATP is bound by residues lysine 10, phenylalanine 58, arginine 86, threonine 92, arginine 103, and asparagine 113. The active-site Pros-phosphohistidine intermediate is the histidine 116.

It belongs to the NDK family. Requires Mg(2+) as cofactor.

It catalyses the reaction a 2'-deoxyribonucleoside 5'-diphosphate + ATP = a 2'-deoxyribonucleoside 5'-triphosphate + ADP. The catalysed reaction is a ribonucleoside 5'-diphosphate + ATP = a ribonucleoside 5'-triphosphate + ADP. Major role in the synthesis of nucleoside triphosphates other than ATP. The ATP gamma phosphate is transferred to the NDP beta phosphate via a ping-pong mechanism, using a phosphorylated active-site intermediate. This NDK is microtubule-associated. The chain is Nucleoside diphosphate kinase 1 (NDPK1) from Pisum sativum (Garden pea).